A 356-amino-acid polypeptide reads, in one-letter code: S-adenosylmethionine:tRNA ribosyltransferase-isomerase (356 aa).

The protein belongs to the QueA family. Monomer.

It localises to the cytoplasm. It catalyses the reaction 7-aminomethyl-7-carbaguanosine(34) in tRNA + S-adenosyl-L-methionine = epoxyqueuosine(34) in tRNA + adenine + L-methionine + 2 H(+). Its pathway is tRNA modification; tRNA-queuosine biosynthesis. Its function is as follows. Transfers and isomerizes the ribose moiety from AdoMet to the 7-aminomethyl group of 7-deazaguanine (preQ1-tRNA) to give epoxyqueuosine (oQ-tRNA). This Xanthomonas campestris pv. campestris (strain 8004) protein is S-adenosylmethionine:tRNA ribosyltransferase-isomerase.